A 709-amino-acid polypeptide reads, in one-letter code: Septu protein PtuA (709 aa).

In terms of biological role, component of antiviral defense system Septu type II, composed of PtuA and PtuB. Expression of Septu type II in B.subtilis (strain BEST7003) confers resistance to phages SBSphiC and SpBeta. May be an ATPase. This chain is Septu protein PtuA, found in Bacillus mycoides (strain KBAB4) (Bacillus weihenstephanensis).